A 640-amino-acid polypeptide reads, in one-letter code: Biosynthetic arginine decarboxylase (640 aa).

Lysine 105 is subject to N6-(pyridoxal phosphate)lysine. 290-300 (FDVGGGLAVDY) provides a ligand contact to substrate.

It belongs to the Orn/Lys/Arg decarboxylase class-II family. SpeA subfamily. Mg(2+) serves as cofactor. The cofactor is pyridoxal 5'-phosphate.

The catalysed reaction is L-arginine + H(+) = agmatine + CO2. In terms of biological role, catalyzes the biosynthesis of agmatine from arginine. In Vibrio cholerae serotype O1 (strain ATCC 39315 / El Tor Inaba N16961), this protein is Biosynthetic arginine decarboxylase.